The following is a 226-amino-acid chain: Elongation factor 1-delta 2 (226 aa).

The segment at 82-131 (TACSVSPTADQKAPAADEEDDDDVDLFGEETEEEKKAAEERAAAVKASGK) is disordered. Residues 97–113 (ADEEDDDDVDLFGEETE) show a composition bias toward acidic residues. Basic and acidic residues predominate over residues 114 to 124 (EEKKAAEERAA).

The protein belongs to the EF-1-beta/EF-1-delta family. EF-1 is composed of 4 subunits: alpha, beta (1B-alpha=beta'), delta (1B-beta), and gamma (1B-gamma).

EF-1-beta and EF-1-beta' stimulate the exchange of GDP bound to EF-1-alpha to GTP. The polypeptide is Elongation factor 1-delta 2 (Oryza sativa subsp. japonica (Rice)).